The primary structure comprises 298 residues: Proline iminopeptidase (298 aa).

In terms of domain architecture, AB hydrolase-1 spans 26 to 277 (VLLLHGGPAM…NGSHLAMWDD (252 aa)). Ser-103 acts as the Nucleophile in catalysis. Asp-244 is a catalytic residue. Residue His-271 is the Proton donor of the active site.

This sequence belongs to the peptidase S33 family. In terms of assembly, monomer.

The enzyme catalyses Release of N-terminal proline from a peptide.. Functionally, releases the N-terminal proline from various substrates. Cleaves specifically Pro-betaNA and small peptides containing proline at the amino terminal. No activity against hydroxyproline-betaNA. The chain is Proline iminopeptidase (fpaP) from Elizabethkingia meningoseptica (Chryseobacterium meningosepticum).